The chain runs to 1210 residues: Disease resistance-like protein DSC2 (1210 aa).

The 165-residue stretch at 59 to 223 (WTHQVFPSFR…KVAKDVSDVL (165 aa)) folds into the TIR domain. E134 is an active-site residue. In terms of domain architecture, NB-ARC spans 241-511 (ITRINSLLCL…CLFNGCQVNH (271 aa)). 9 LRR repeats span residues 662–685 (AKFL…IQPL), 686–709 (KNLK…SNAT), 711–732 (LESL…IRGT), 756–780 (ATSL…LPGD), 783–804 (MRSL…PEIS), 805–828 (TNIQ…RLWS), 830–848 (LDKL…PPVP), 849–873 (DGIS…NLSQ), and 940–970 (LPEL…NLSQ).

It belongs to the disease resistance NB-LRR family. In terms of assembly, interacts with DSC1.

The catalysed reaction is NAD(+) + H2O = ADP-D-ribose + nicotinamide + H(+). Its function is as follows. TIR-NB-LRR receptor-like protein involved in plant defense. Acts as a trigger of hypersensitive response (HR). Functions as a guard of CAMTA3, a negative regulator of immunity, during pathogen infection. This chain is Disease resistance-like protein DSC2, found in Arabidopsis thaliana (Mouse-ear cress).